The following is a 229-amino-acid chain: Protein GrpE (229 aa).

Residues 1 to 89 (MSDFNKDDYL…AEGSSLTPLG (89 aa)) form a disordered region. The segment covering 24 to 36 (ASPDADGADAPSD) has biased composition (low complexity). Basic and acidic residues predominate over residues 39-50 (EQLKDDMLKDAA). A compositionally biased stretch (low complexity) spans 65–84 (KAAAEATADAASDGDAEGSS).

It belongs to the GrpE family. In terms of assembly, homodimer.

Its subcellular location is the cytoplasm. Its function is as follows. Participates actively in the response to hyperosmotic and heat shock by preventing the aggregation of stress-denatured proteins, in association with DnaK and GrpE. It is the nucleotide exchange factor for DnaK and may function as a thermosensor. Unfolded proteins bind initially to DnaJ; upon interaction with the DnaJ-bound protein, DnaK hydrolyzes its bound ATP, resulting in the formation of a stable complex. GrpE releases ADP from DnaK; ATP binding to DnaK triggers the release of the substrate protein, thus completing the reaction cycle. Several rounds of ATP-dependent interactions between DnaJ, DnaK and GrpE are required for fully efficient folding. The chain is Protein GrpE from Bifidobacterium animalis subsp. lactis (strain AD011).